Here is a 167-residue protein sequence, read N- to C-terminus: Endoribonuclease YbeY (167 aa).

Positions 131, 135, and 141 each coordinate Zn(2+).

This sequence belongs to the endoribonuclease YbeY family. Zn(2+) is required as a cofactor.

It localises to the cytoplasm. In terms of biological role, single strand-specific metallo-endoribonuclease involved in late-stage 70S ribosome quality control and in maturation of the 3' terminus of the 16S rRNA. The protein is Endoribonuclease YbeY of Rickettsia rickettsii (strain Sheila Smith).